The chain runs to 510 residues: Glutamate decarboxylase (510 aa).

107–109 (QLS) contacts substrate. An N6-(pyridoxal phosphate)lysine modification is found at Lys-322. Position 483 (Arg-483) interacts with substrate.

Belongs to the group II decarboxylase family. Homodimer. Requires pyridoxal 5'-phosphate as cofactor. In terms of tissue distribution, expressed in the head (at protein level).

The catalysed reaction is L-glutamate + H(+) = 4-aminobutanoate + CO2. Catalyzes the production of GABA. This is Glutamate decarboxylase (Gad1) from Drosophila melanogaster (Fruit fly).